Here is a 367-residue protein sequence, read N- to C-terminus: D-alanine--D-alanine ligase (367 aa).

Residues 150 to 357 (KKLLTAAGLP…YPTLLATMVE (208 aa)) form the ATP-grasp domain. 178–233 (RERLGLPVFVKPSRGGSSIGVSRVTAWDALPAAIELARRHDPKVIVEAAIPGRELE) is a binding site for ATP. 3 residues coordinate Mg(2+): Asp-312, Glu-324, and Asn-326.

It belongs to the D-alanine--D-alanine ligase family. Mg(2+) is required as a cofactor. The cofactor is Mn(2+).

It localises to the cytoplasm. It carries out the reaction 2 D-alanine + ATP = D-alanyl-D-alanine + ADP + phosphate + H(+). It participates in cell wall biogenesis; peptidoglycan biosynthesis. Cell wall formation. This chain is D-alanine--D-alanine ligase, found in Mycolicibacterium vanbaalenii (strain DSM 7251 / JCM 13017 / BCRC 16820 / KCTC 9966 / NRRL B-24157 / PYR-1) (Mycobacterium vanbaalenii).